A 506-amino-acid chain; its full sequence is Pisatin demethylase (506 aa).

C453 serves as a coordination point for heme.

This sequence belongs to the cytochrome P450 family. It depends on heme as a cofactor.

Can detoxify the phytoalexin pisatin from garden pea. Pisatin is an antimicrobial compound produced by pea in response to infection by plant pathogens. The protein is Pisatin demethylase (PDA6-1) of Fusarium vanettenii (Neocosmospora pisi).